Here is a 207-residue protein sequence, read N- to C-terminus: Ras-related protein Rab-8A (207 aa).

GTP contacts are provided by Ser-17, Gly-18, Val-19, Gly-20, Lys-21, Thr-22, Cys-23, Ser-35, Ser-39, and Thr-40. Residue Thr-22 participates in Mg(2+) binding. 2 short sequence motifs (switch) span residues 31–45 (DAFN…GIDF) and 63–80 (DTAG…YYRG). Thr-40 and Asp-63 together coordinate Mg(2+). A GTP-binding site is contributed by Gly-66. The residue at position 72 (Thr-72) is a Phosphothreonine. Residues Asn-121, Lys-122, Asp-124, Ala-152, and Lys-153 each contribute to the GTP site. Ser-181 and Ser-185 each carry phosphoserine. Cys-204 is subject to Cysteine methyl ester. A lipid anchor (S-geranylgeranyl cysteine) is attached at Cys-204. The propeptide at 205-207 (VLL) is removed in mature form.

The protein belongs to the small GTPase superfamily. Rab family. As to quaternary structure, interacts (GTP-bound form) with MICALL1; regulates RAB8A association with recycling endosomes. Interacts with MICALL2; competes with RAB13 and is involved in E-cadherin endocytic recycling. Interacts (GTP-bound form) with MICAL1, MICALCL, MICAL3, EHBP1 and EHBP1L1; at least in case of MICAL1, MICALCL, MICAL3 and EHBP1L1 two molecules of RAB8A can bind to one molecule of the effector protein; ternary complexes of RAB8A, RAB13 and either MICAL1 or EHBP1L1 are possible. Interacts with EHD1. Interacts with MAP4K2 and SYTL4. Interacts with SGSM1 and SGSM3. Interacts with RABIF, RIMS2, RPH3A and RPH3A. Interacts with OPTN. Interacts with RAB3IP, RAB3IP functions as guanine exchange factor (GEF). Interacts with MYO5B. Interacts with CIMAP3. Interacts with BIRC6/bruce. Interacts with OCRL. Interacts with AHI1. Interacts with DCDC1. Interacts with LRRK2; interaction facilitates phosphorylation of Thr-72. Interacts with RAB31P, GDI1, GDI2, CHM, CHML, RABGGTA, RABGGTB, TBC1D15 and INPP5B; these interactions are dependent on Thr-72 not being phosphorylated. Interacts with RILPL1 and RILPL2; these interactions are dependent on the phosphorylation of Thr-72 by LRRK2. Interacts with DZIP1; prevents inhibition by the GDP-dissociation inhibitor GDI2. Interacts (in GDP-bound form) with RAB3IP/Rabin8, RAB3IP functions as guanine exchange factor (GEF) towards RAB8A. Interacts (in GDP-bound form) with RPGR, RPGR functions as GEF towards RAB8A. Mg(2+) serves as cofactor. In terms of processing, phosphorylation of Thr-72 in the switch II region by LRRK2 prevents the association of RAB regulatory proteins, including CHM, CHML and RAB GDP dissociation inhibitors GDI1 and GDI2. Phosphorylation by LRRK2 is required for localization to stressed lysosomes.

The protein resides in the cell membrane. Its subcellular location is the golgi apparatus. It is found in the endosome membrane. The protein localises to the recycling endosome membrane. It localises to the cell projection. The protein resides in the cilium. Its subcellular location is the cytoplasmic vesicle. It is found in the phagosome membrane. The protein localises to the cytoplasm. It localises to the cytoskeleton. The protein resides in the microtubule organizing center. Its subcellular location is the centrosome. It is found in the centriole. The protein localises to the cilium basal body. It localises to the midbody. The protein resides in the lysosome. The catalysed reaction is GTP + H2O = GDP + phosphate + H(+). Its activity is regulated as follows. Regulated by guanine nucleotide exchange factors (GEFs) such as RAB3IP/Rabin8 and RPGR which promote the exchange of bound GDP for free GTP, GTPase activating proteins (GAPs) which increase the GTP hydrolysis activity, and GDP dissociation inhibitors (GDIs) which inhibit the dissociation of the nucleotide from the GTPase. Activated in response to insulin. Its function is as follows. The small GTPases Rab are key regulators of intracellular membrane trafficking, from the formation of transport vesicles to their fusion with membranes. Rabs cycle between an inactive GDP-bound form and an active GTP-bound form that is able to recruit to membranes different sets of downstream effectors directly responsible for vesicle formation, movement, tethering and fusion. RAB8A is involved in polarized vesicular trafficking and neurotransmitter release. Together with RAB11A, RAB3IP, the exocyst complex, PARD3, PRKCI, ANXA2, CDC42 and DNMBP promotes transcytosis of PODXL to the apical membrane initiation sites (AMIS), apical surface formation and lumenogenesis. Regulates the compacted morphology of the Golgi. Together with MYO5B and RAB11A participates in epithelial cell polarization. Also involved in membrane trafficking to the cilium and ciliogenesis. Together with MICALL2, may also regulate adherens junction assembly. May play a role in insulin-induced transport to the plasma membrane of the glucose transporter GLUT4 and therefore play a role in glucose homeostasis. Involved in autophagy. Participates in the export of a subset of neosynthesized proteins through a Rab8-Rab10-Rab11-dependent endososomal export route. Targeted to and stabilized on stressed lysosomes through LRRK2 phosphorylation. Suppresses stress-induced lysosomal enlargement through EHBP1 and EHNP1L1 effector proteins. This Pongo abelii (Sumatran orangutan) protein is Ras-related protein Rab-8A (RAB8A).